Here is a 413-residue protein sequence, read N- to C-terminus: Dual-specificity RNA methyltransferase RlmN (413 aa).

Glu126 functions as the Proton acceptor in the catalytic mechanism. Residues 132–381 (EEGRGTLCIS…IRTPRGRDIL (250 aa)) enclose the Radical SAM core domain. Residues Cys139 and Cys384 are joined by a disulfide bond. Positions 146, 150, and 153 each coordinate [4Fe-4S] cluster. S-adenosyl-L-methionine-binding positions include 210–211 (GE), Ser242, 264–266 (SLH), and Asn341. Cys384 serves as the catalytic S-methylcysteine intermediate.

Belongs to the radical SAM superfamily. RlmN family. The cofactor is [4Fe-4S] cluster.

It is found in the cytoplasm. The enzyme catalyses adenosine(2503) in 23S rRNA + 2 reduced [2Fe-2S]-[ferredoxin] + 2 S-adenosyl-L-methionine = 2-methyladenosine(2503) in 23S rRNA + 5'-deoxyadenosine + L-methionine + 2 oxidized [2Fe-2S]-[ferredoxin] + S-adenosyl-L-homocysteine. The catalysed reaction is adenosine(37) in tRNA + 2 reduced [2Fe-2S]-[ferredoxin] + 2 S-adenosyl-L-methionine = 2-methyladenosine(37) in tRNA + 5'-deoxyadenosine + L-methionine + 2 oxidized [2Fe-2S]-[ferredoxin] + S-adenosyl-L-homocysteine. Specifically methylates position 2 of adenine 2503 in 23S rRNA and position 2 of adenine 37 in tRNAs. m2A2503 modification seems to play a crucial role in the proofreading step occurring at the peptidyl transferase center and thus would serve to optimize ribosomal fidelity. In Sinorhizobium medicae (strain WSM419) (Ensifer medicae), this protein is Dual-specificity RNA methyltransferase RlmN.